The sequence spans 154 residues: Vimentin (154 aa).

Residues 1 to 13 (MSTRSVSSSSYRR) are compositionally biased toward low complexity. The disordered stretch occupies residues 1 to 31 (MSTRSVSSSSYRRMFGGPGTASRPSSTRSYV). Serine 2 carries the N-acetylserine modification. The interval 2 to 95 (STRSVSSSSY…FSLADAINTE (94 aa)) is head. A Phosphoserine modification is found at serine 5. Phosphoserine; by PKA and PKC; alternate is present on serine 7. Serine 7 carries O-linked (GlcNAc) serine; alternate glycosylation. Residue serine 8 is modified to Phosphoserine. A phosphoserine; by PKC mark is found at serine 9 and serine 10. Threonine 20 bears the Phosphothreonine mark. A Phosphoserine; by PKA and PKC modification is found at serine 25. Phosphoserine; by PKC is present on serine 26. Threonine 33 carries an O-linked (GlcNAc) threonine glycan. Serine 34 is a glycosylation site (O-linked (GlcNAc) serine; alternate). Serine 34 is subject to Phosphoserine; by PKC; alternate. Position 39 is a phosphoserine; by CaMK2, PKA, PKC and ROCK2 (serine 39). A Phosphoserine; by PKC modification is found at serine 42. Residue serine 49 is modified to Phosphoserine. A Phosphotyrosine modification is found at tyrosine 53. Phosphoserine is present on serine 55. Residue serine 56 is modified to Phosphoserine; by CDK5 and CDK1. Tyrosine 61 is subject to Phosphotyrosine. Serine 66 bears the Phosphoserine; by PKA and PKC mark. Serine 72 carries the phosphoserine; by AURKB and ROCK2 modification. Serine 83 bears the Phosphoserine; by CaMK2 mark. Residue serine 87 is modified to Phosphoserine. The segment at 96–131 (FKNTRTNEKVELQELNDRFANYIDKVRFLEQQNKIL) is coil 1A. A coiled-coil region spans residues 96–131 (FKNTRTNEKVELQELNDRFANYIDKVRFLEQQNKIL). Residues 103–154 (EKVELQELNDRFANYIDKVRFLEQQNKILLAELEQLKGQGKSRLGHLYEEEM) enclose the IF rod domain. Residue lysine 104 forms a Glycyl lysine isopeptide (Lys-Gly) (interchain with G-Cter in SUMO2) linkage. Tyrosine 117 is subject to Phosphotyrosine. Residues lysine 120, lysine 129, and lysine 139 each carry the N6-acetyllysine; alternate modification. An N6-succinyllysine; alternate mark is found at lysine 120 and lysine 129. Glycyl lysine isopeptide (Lys-Gly) (interchain with G-Cter in SUMO2); alternate cross-links involve residues lysine 120, lysine 129, and lysine 139. Residues 132–153 (LAELEQLKGQGKSRLGHLYEEE) are linker 1. Residue serine 144 is modified to Phosphoserine. Position 154 (methionine 154) is a region of interest, coil 1B.

It belongs to the intermediate filament family. As to quaternary structure, homomer assembled from elementary dimers. Identified in complexes that contain VIM, EZR, AHNAK, BFSP1, BFSP2, ANK2, PLEC, PRX and spectrin. Interacts with BCAS3. Interacts with LGSN. Interacts with SYNM. Interacts (via rod region) with PLEC (via CH 1 domain). Interacts with STK33. Interacts with LARP6. Interacts with RAB8B. Interacts with TOR1A; the interaction associates TOR1A with the cytoskeleton. Interacts with TOR1AIP1. Interacts with TOR1AIP1. Interacts with DIAPH1. Interacts with EPPK1; interaction is dependent of higher-order structure of intermediate filament. Interacts with the non-receptor tyrosine kinase SRMS; the interaction leads to phosphorylation of VIM. Interacts with NOD2. Interacts (via head region) with CORO1C. Interacts with HDGF. Interacts with PRKCE (via phorbol-ester/DAG-type 2 domain). Interacts with BFSP2. Interacts with PPL. Interacts with PKP1 and PKP2. Interacts with SCRIB (via PDZ domains); the interaction protects SCRIB from proteasomal degradation and facilitates SCRIB localization to intermediate filaments, the interaction is reduced by cell contact inhibition. In terms of processing, one of the most prominent phosphoproteins in various cells of mesenchymal origin. Phosphorylation is enhanced during cell division, at which time vimentin filaments are significantly reorganized. Phosphorylation by PKN1 inhibits the formation of filaments. Filament disassembly during mitosis is promoted by phosphorylation at Ser-55 as well as by nestin. Phosphorylated at Ser-56 by CDK5 during neutrophil secretion in the cytoplasm. Phosphorylated by STK33. Phosphorylated on tyrosine residues by SRMS.

Its subcellular location is the cytoplasm. It localises to the cytoskeleton. The protein localises to the nucleus matrix. It is found in the cell membrane. Its function is as follows. Vimentins are class-III intermediate filaments found in various non-epithelial cells, especially mesenchymal cells. Vimentin is attached to the nucleus, endoplasmic reticulum, and mitochondria, either laterally or terminally. Plays a role in cell directional movement, orientation, cell sheet organization and Golgi complex polarization at the cell migration front. Protects SCRIB from proteasomal degradation and facilitates its localization to intermediate filaments in a cell contact-mediated manner. In terms of biological role, involved with LARP6 in the stabilization of type I collagen mRNAs for CO1A1 and CO1A2. This chain is Vimentin (VIM), found in Ovis aries (Sheep).